The chain runs to 105 residues: Large ribosomal subunit protein uL24 (105 aa).

Belongs to the universal ribosomal protein uL24 family. As to quaternary structure, part of the 50S ribosomal subunit.

Functionally, one of two assembly initiator proteins, it binds directly to the 5'-end of the 23S rRNA, where it nucleates assembly of the 50S subunit. Its function is as follows. One of the proteins that surrounds the polypeptide exit tunnel on the outside of the subunit. The polypeptide is Large ribosomal subunit protein uL24 (Xylella fastidiosa (strain 9a5c)).